Consider the following 575-residue polypeptide: 3-hydroxy-3-methylglutaryl-coenzyme A reductase 1 (575 aa).

Residues 1–13 are compositionally biased toward basic residues; that stretch reads MDTTGRLHHRKHA. Positions 1–25 are disordered; it reads MDTTGRLHHRKHATPVEDRSPTTPK. Helical transmembrane passes span 29-49 and 73-93; these read ALPLPLYLTNAVFFTLFFSVA and EIVAIVSLIASFIYLLGFFGI. Residues 97–160 are linker; the sequence is QSFIARASHD…PLIAPLVSEE (64 aa). N-linked (GlcNAc...) asparagine glycosylation is present at asparagine 132. The segment at 161-575 is catalytic; the sequence is DEMIVNSVVD…SSKDMSKAAS (415 aa). The Charge relay system role is filled by glutamate 254. Residue asparagine 318 is glycosylated (N-linked (GlcNAc...) asparagine). Active-site charge relay system residues include lysine 386 and aspartate 462. Residues 531-551 traverse the membrane as a helical segment; it reads LLAAIVAGSVLAGELSLMSAI. Histidine 560 serves as the catalytic Proton donor. An N-linked (GlcNAc...) asparagine glycan is attached at asparagine 564.

Belongs to the HMG-CoA reductase family.

It localises to the endoplasmic reticulum membrane. Its subcellular location is the mitochondrion membrane. The protein localises to the plastid membrane. It carries out the reaction (R)-mevalonate + 2 NADP(+) + CoA = (3S)-3-hydroxy-3-methylglutaryl-CoA + 2 NADPH + 2 H(+). Its pathway is metabolic intermediate biosynthesis; (R)-mevalonate biosynthesis; (R)-mevalonate from acetyl-CoA: step 3/3. Catalyzes the synthesis of mevalonate. The specific precursor of all isoprenoid compounds present in plants. This chain is 3-hydroxy-3-methylglutaryl-coenzyme A reductase 1 (HMGR1), found in Hevea brasiliensis (Para rubber tree).